A 70-amino-acid polypeptide reads, in one-letter code: Brevinin-1Vb (70 aa).

The first 22 residues, 1–22, serve as a signal peptide directing secretion; it reads MFTLKKSLLLLFFLGTINLSLC. A propeptide spanning residues 23 to 44 is cleaved from the precursor; it reads EEERNAEEERRDEPDEMNVEVE. Cys-64 and Cys-70 are oxidised to a cystine.

As to expression, expressed by the skin glands.

Its subcellular location is the secreted. Its function is as follows. Antimicrobial peptide. This Odorrana versabilis (Chinese bamboo leaf odorous frog) protein is Brevinin-1Vb.